A 964-amino-acid chain; its full sequence is Fanconi-associated nuclease 1 homolog (964 aa).

Positions 31 to 56 are disordered; sequence SRSLQDDAADAEREAAAGGSSSGGGD. A UBZ4-type zinc finger spans residues 63-92; it reads WVACPVCGESIRGTDYCVNTHLDICLTRGT. Zn(2+) is bound by residues C66, C69, H83, and C87. Residues E786, D907, E926, and V927 each coordinate Mn(2+). Positions 844–958 constitute a VRR-NUC domain; the sequence is GIAEEILISS…GFDVEVCKVS (115 aa).

The protein belongs to the FAN1 family. The cofactor is Mn(2+). It depends on Mg(2+) as a cofactor.

The enzyme catalyses Hydrolytically removes 5'-nucleotides successively from the 3'-hydroxy termini of 3'-hydroxy-terminated oligonucleotides.. Functionally, nuclease required for the repair of DNA interstrand cross-links (ICL). Acts as a 5'-3' exonuclease that anchors at a cut end of DNA and cleaves DNA successively at every third nucleotide, allowing to excise an ICL from one strand through flanking incisions. This chain is Fanconi-associated nuclease 1 homolog, found in Oryza sativa subsp. japonica (Rice).